The primary structure comprises 132 residues: Large ribosomal subunit protein uL14 (132 aa).

This sequence belongs to the universal ribosomal protein uL14 family. As to quaternary structure, part of the 50S ribosomal subunit. Forms a cluster with proteins L3 and L24e, part of which may contact the 16S rRNA in 2 intersubunit bridges.

Functionally, binds to 23S rRNA. Forms part of two intersubunit bridges in the 70S ribosome. This chain is Large ribosomal subunit protein uL14, found in Thermoplasma acidophilum (strain ATCC 25905 / DSM 1728 / JCM 9062 / NBRC 15155 / AMRC-C165).